The following is a 380-amino-acid chain: Homoserine O-succinyltransferase (380 aa).

An AB hydrolase-1 domain is found at 49–357; the sequence is NAILICHALS…ESTHGHDAFL (309 aa). The active-site Nucleophile is the S155. R225 provides a ligand contact to substrate. Active-site residues include D320 and H353. D354 contacts substrate.

This sequence belongs to the AB hydrolase superfamily. MetX family. Homodimer.

Its subcellular location is the cytoplasm. The catalysed reaction is L-homoserine + succinyl-CoA = O-succinyl-L-homoserine + CoA. It functions in the pathway amino-acid biosynthesis; L-methionine biosynthesis via de novo pathway; O-succinyl-L-homoserine from L-homoserine: step 1/1. Its function is as follows. Transfers a succinyl group from succinyl-CoA to L-homoserine, forming succinyl-L-homoserine. This Laribacter hongkongensis (strain HLHK9) protein is Homoserine O-succinyltransferase.